The sequence spans 736 residues: Epithelial splicing regulatory protein 2 (736 aa).

3 RRM domains span residues 224–301, 325–405, and 659–736; these read TVIR…KATG, MIIR…RSTA, and ALVR…ACCE.

It belongs to the ESRP family.

It localises to the nucleus. Its function is as follows. mRNA splicing factor that regulates the formation of epithelial cell-specific isoforms. Specifically regulates the expression of FGFR2-IIIb, an epithelial cell-specific isoform of fgfr2. Acts by directly binding specific sequences in mRNAs. Binds the GU-rich sequence motifs in the ISE/ISS-3, a cis-element regulatory region present in the mRNA of fgfr2. The protein is Epithelial splicing regulatory protein 2 (esrp2) of Danio rerio (Zebrafish).